A 131-amino-acid polypeptide reads, in one-letter code: Profilin-1 (131 aa).

The protein belongs to the profilin family. Occurs in many kinds of cells as a complex with monomeric actin in a 1:1 ratio.

It is found in the cytoplasm. It localises to the cytoskeleton. Functionally, binds to actin and affects the structure of the cytoskeleton. At high concentrations, profilin prevents the polymerization of actin, whereas it enhances it at low concentrations. By binding to PIP2, it inhibits the formation of IP3 and DG. The sequence is that of Profilin-1 (PRO1) from Ricinus communis (Castor bean).